We begin with the raw amino-acid sequence, 447 residues long: Blue-light photoreceptor PHR2 (447 aa).

Residues 1–14 (MDSSNVEENLNPET) are compositionally biased toward polar residues. The interval 1-20 (MDSSNVEENLNPETKSAEEQ) is disordered. In terms of domain architecture, Photolyase/cryptochrome alpha/beta spans 115-249 (RAAVVWFRND…EVKYFWGSTL (135 aa)).

Belongs to the DNA photolyase class-1 family. Requires FAD as cofactor.

This Arabidopsis thaliana (Mouse-ear cress) protein is Blue-light photoreceptor PHR2 (PHR2).